Reading from the N-terminus, the 396-residue chain is Gap junction gamma-1 protein (396 aa).

At 1–22 the chain is on the cytoplasmic side; that stretch reads MSWSFLTRLLEEIHNHSTFVGK. The chain crosses the membrane as a helical span at residues 23-45; sequence IWLTVLIVFRIVLTAVGGESIYY. At 46-75 the chain is on the extracellular side; the sequence is DEQSKFVCNTEQPGCENVCYDAFAPLSHVR. The chain crosses the membrane as a helical span at residues 76–95; sequence FWVFQIILVATPSVMYLGYA. The Cytoplasmic portion of the chain corresponds to 96–175; it reads IHKIAKMEHG…RRIREDGLMK (80 aa). The disordered stretch occupies residues 145 to 165; sequence ELESDKENKEQSQPKPKHDGR. The segment covering 147-156 has biased composition (basic and acidic residues); the sequence is ESDKENKEQS. A helical transmembrane segment spans residues 176–198; the sequence is IYVLQLLARTVFEVGFLIGQYFL. Residues 199-228 lie on the Extracellular side of the membrane; the sequence is YGFQVHPFYVCSRLPCPHKIDCFISRPTEK. The chain crosses the membrane as a helical span at residues 229-248; it reads TIFLLIMYGVTGLCLLLNIW. Residues 249–396 are Cytoplasmic-facing; the sequence is EMLHLGFGTI…SGDGKTSVWI (148 aa). Residues 353–396 are disordered; it reads VQAYSHQNNPHGPREKKAKVGSKAGSNKSTASSKSGDGKTSVWI. The segment covering 376–387 has biased composition (polar residues); that stretch reads AGSNKSTASSKS.

Belongs to the connexin family. Gamma-type subfamily. As to quaternary structure, a connexon is composed of a hexamer of connexins. Interacts with CNST.

The protein resides in the cell membrane. The protein localises to the cell junction. It is found in the gap junction. One gap junction consists of a cluster of closely packed pairs of transmembrane channels, the connexons, through which materials of low MW diffuse from one cell to a neighboring cell. The chain is Gap junction gamma-1 protein (GJC1) from Homo sapiens (Human).